The following is a 687-amino-acid chain: Tripartite terminase subunit 3 (687 aa).

Positions 67–91 (HHPATPTSANPDVGTPRPSEDNVPA) are disordered. A Walker A motif motif is present at residues 221–228 (IPRRHGKT). A Walker B motif motif is present at residues 316-321 (LLYVDE). Residue glutamate 321 is the For ATPase activity of the active site. Residues aspartate 476, glutamate 550, and aspartate 662 each act as for nuclease activity in the active site.

This sequence belongs to the herpesviridae TRM3 protein family. As to quaternary structure, interacts with the terminase subunits TRM1 and TRM2. Interacts with portal protein.

It is found in the host nucleus. Functionally, component of the molecular motor that translocates viral genomic DNA in empty capsid during DNA packaging. Forms a tripartite terminase complex together with TRM1 and TRM2 in the host cytoplasm. Once the complex reaches the host nucleus, it interacts with the capsid portal vertex. This portal forms a ring in which genomic DNA is translocated into the capsid. TRM3 carries an RNase H-like nuclease activity that plays an important role for the cleavage of concatemeric viral DNA into unit length genomes. The sequence is that of Tripartite terminase subunit 3 from Human herpesvirus 8 type P (isolate GK18) (HHV-8).